The sequence spans 340 residues: Ribonucleoside-diphosphate reductase small subunit (340 aa).

A helical membrane pass occupies residues 180–200; it reads FILMILIEGIFFAASFAAIAY.

This sequence belongs to the ribonucleoside diphosphate reductase small chain family. Heterotetramer composed of a homodimer of the large subunit (R1) and a homodimer of the small subunit (R2). Larger multisubunit protein complex are also active, composed of (R1)n(R2)n. Fe cation serves as cofactor.

The protein localises to the host membrane. It carries out the reaction a 2'-deoxyribonucleoside 5'-diphosphate + [thioredoxin]-disulfide + H2O = a ribonucleoside 5'-diphosphate + [thioredoxin]-dithiol. Its function is as follows. Ribonucleoside-diphosphate reductase holoenzyme provides the precursors necessary for viral DNA synthesis. Allows virus growth in non-dividing cells, as well as reactivation from latency in infected hosts. Catalyzes the biosynthesis of deoxyribonucleotides from the corresponding ribonucleotides. This chain is Ribonucleoside-diphosphate reductase small subunit, found in Human herpesvirus 1 (strain 17) (HHV-1).